Consider the following 802-residue polypeptide: Lon protease (802 aa).

A Lon N-terminal domain is found at 21 to 215; the sequence is LPLLPVRDII…KIIQILNAEI (195 aa). Residue 367 to 374 participates in ATP binding; that stretch reads GPPGVGKT. Positions 603–784 constitute a Lon proteolytic domain; it reads ENDVGVATGL…DEVISLTIER (182 aa). Catalysis depends on residues Ser690 and Lys733.

The protein belongs to the peptidase S16 family. As to quaternary structure, homohexamer. Organized in a ring with a central cavity.

Its subcellular location is the cytoplasm. The enzyme catalyses Hydrolysis of proteins in presence of ATP.. Its function is as follows. ATP-dependent serine protease that mediates the selective degradation of mutant and abnormal proteins as well as certain short-lived regulatory proteins. Required for cellular homeostasis and for survival from DNA damage and developmental changes induced by stress. Degrades polypeptides processively to yield small peptide fragments that are 5 to 10 amino acids long. Binds to DNA in a double-stranded, site-specific manner. This chain is Lon protease, found in Endomicrobium trichonymphae.